A 289-amino-acid chain; its full sequence is MNNRDNLHRFLFEEAKIRGELVQLDASWRAVLACHDYPAVVQSQLGQALAATILLSATIKFKGSLILQTQSEGPLQTLVAQATHHRTLRGLARWDGDVPHGSLSETYGSGRLALTIQTEGKNPYQGIVSLEGVNLAEALQTYFSRSEQLRTRLWLVADEQQAVGLFLQELPSQQGHKTDWERIALLASTVTTQEMLSLPSTELLYRLFNEEQVRLFEPEPVSFRCGCSRGRIEQTLAALGREEMESILKEQGIIEVDCEFCNRHYNFDRVDMEQLFTEQVKAPVTSTRH.

Disulfide bonds link Cys-225-Cys-227 and Cys-258-Cys-261.

This sequence belongs to the HSP33 family. Post-translationally, under oxidizing conditions two disulfide bonds are formed involving the reactive cysteines. Under reducing conditions zinc is bound to the reactive cysteines and the protein is inactive.

Its subcellular location is the cytoplasm. Its function is as follows. Redox regulated molecular chaperone. Protects both thermally unfolding and oxidatively damaged proteins from irreversible aggregation. Plays an important role in the bacterial defense system toward oxidative stress. This Nitrosococcus oceani (strain ATCC 19707 / BCRC 17464 / JCM 30415 / NCIMB 11848 / C-107) protein is 33 kDa chaperonin.